We begin with the raw amino-acid sequence, 94 residues long: Large ribosomal subunit protein bL25 (94 aa).

It belongs to the bacterial ribosomal protein bL25 family. Part of the 50S ribosomal subunit; part of the 5S rRNA/L5/L18/L25 subcomplex. Contacts the 5S rRNA. Binds to the 5S rRNA independently of L5 and L18.

Functionally, this is one of the proteins that binds to the 5S RNA in the ribosome where it forms part of the central protuberance. The chain is Large ribosomal subunit protein bL25 from Salmonella agona (strain SL483).